The primary structure comprises 229 residues: Phosphoglycolate phosphatase (229 aa).

Catalysis depends on Asp13, which acts as the Nucleophile. The Mg(2+) site is built by Asp13, Asp15, and Asp178.

The protein belongs to the HAD-like hydrolase superfamily. CbbY/CbbZ/Gph/YieH family. The cofactor is Mg(2+).

The enzyme catalyses 2-phosphoglycolate + H2O = glycolate + phosphate. The protein operates within organic acid metabolism; glycolate biosynthesis; glycolate from 2-phosphoglycolate: step 1/1. Functionally, specifically catalyzes the dephosphorylation of 2-phosphoglycolate. Is involved in the dissimilation of the intracellular 2-phosphoglycolate formed during the DNA repair of 3'-phosphoglycolate ends, a major class of DNA lesions induced by oxidative stress. The sequence is that of Phosphoglycolate phosphatase from Photobacterium profundum (strain SS9).